The primary structure comprises 249 residues: MSRRKKRVTGEQALRLEFESVDHQPLIDALGVDIPRELLVLALTHRSFANENGMLPNNERLEFLGDSVLGLSVAGQLYQQYTSSPESDISKMRASIVSRYGLADIAREINLGQHILLGKGEQLHDGRSKDSILADTTEALLGAIYLAHGFEIARDTVLRLFKHKIDTASATGLHQDWKTTLQERLAERNLEMPTYTSTVTGPEHEQTFTAEVAVHGTVLGTGVGTNKKLAEQAAAHKAVGFLQDNPAFV.

An RNase III domain is found at Val21–Gly149. Mg(2+) is bound at residue Glu62. The active site involves Asp66. Residues Asp135 and Glu138 each coordinate Mg(2+). Glu138 is an active-site residue. A DRBM domain is found at Asp176–Asp244.

It belongs to the ribonuclease III family. In terms of assembly, homodimer. It depends on Mg(2+) as a cofactor.

It localises to the cytoplasm. The enzyme catalyses Endonucleolytic cleavage to 5'-phosphomonoester.. Digests double-stranded RNA. Involved in the processing of primary rRNA transcript to yield the immediate precursors to the large and small rRNAs (23S and 16S). Processes some mRNAs, and tRNAs when they are encoded in the rRNA operon. Processes pre-crRNA and tracrRNA of type II CRISPR loci if present in the organism. In Corynebacterium diphtheriae (strain ATCC 700971 / NCTC 13129 / Biotype gravis), this protein is Ribonuclease 3.